Reading from the N-terminus, the 116-residue chain is Large ribosomal subunit protein uL22 (116 aa).

The protein belongs to the universal ribosomal protein uL22 family. Part of the 50S ribosomal subunit.

Functionally, this protein binds specifically to 23S rRNA; its binding is stimulated by other ribosomal proteins, e.g. L4, L17, and L20. It is important during the early stages of 50S assembly. It makes multiple contacts with different domains of the 23S rRNA in the assembled 50S subunit and ribosome. Its function is as follows. The globular domain of the protein is located near the polypeptide exit tunnel on the outside of the subunit, while an extended beta-hairpin is found that lines the wall of the exit tunnel in the center of the 70S ribosome. This chain is Large ribosomal subunit protein uL22, found in Leptospira biflexa serovar Patoc (strain Patoc 1 / Ames).